The chain runs to 57 residues: MNAQESRYEKARKLGARALQLAHGAPVLIETEHTQPILIAAEEYDAGVLPFTVNRSD.

This sequence belongs to the archaeal Rpo6/eukaryotic RPB6 RNA polymerase subunit family. As to quaternary structure, part of the RNA polymerase complex.

Its subcellular location is the cytoplasm. It catalyses the reaction RNA(n) + a ribonucleoside 5'-triphosphate = RNA(n+1) + diphosphate. DNA-dependent RNA polymerase (RNAP) catalyzes the transcription of DNA into RNA using the four ribonucleoside triphosphates as substrates. The sequence is that of DNA-directed RNA polymerase subunit Rpo6 from Haloarcula marismortui (strain ATCC 43049 / DSM 3752 / JCM 8966 / VKM B-1809) (Halobacterium marismortui).